Consider the following 664-residue polypeptide: Zinc finger protein 800 (664 aa).

The C2H2-type 1; degenerate zinc finger occupies 69–91; it reads FECKLCRSLFRGLPNLITHKKFY. Lys-132 is covalently cross-linked (Glycyl lysine isopeptide (Lys-Gly) (interchain with G-Cter in SUMO2)). 2 stretches are compositionally biased toward polar residues: residues 154–179 and 207–224; these read IEVTESSSTPEQTEVQIQETSTEQSK and SDEQPQESQADLETSDNS. The interval 154–224 is disordered; that stretch reads IEVTESSSTP…QADLETSDNS (71 aa). The segment at 230–253 adopts a C2H2-type 2 zinc-finger fold; it reads LICCLCRKEFNSRRGVRRHIRKVH. Lys-279 is covalently cross-linked (Glycyl lysine isopeptide (Lys-Gly) (interchain with G-Cter in SUMO2)). Residues 287–310 form a C2H2-type 3 zinc finger; that stretch reads RSCPVCCKSFATKANVRRHFDEVH. Phosphoserine is present on Ser-317. Thr-319 carries the phosphothreonine modification. Residues 328-349 are disordered; it reads QPLFLDSISPKKSFKTRKQKSS. A Phosphoserine modification is found at Ser-336. A compositionally biased stretch (basic residues) spans 339–348; that stretch reads KSFKTRKQKS. A C2H2-type 4 zinc finger spans residues 357-382; the sequence is TACKCLLCKRKYSSQIMLKRHMQIVH. The segment at 388 to 476 is disordered; sequence GTNSKREKGP…GGQQKTRKPK (89 aa). A Glycyl lysine isopeptide (Lys-Gly) (interchain with G-Cter in SUMO2) cross-link involves residue Lys-392. Lys-409 is covalently cross-linked (Glycyl lysine isopeptide (Lys-Gly) (interchain with G-Cter in SUMO1); alternate). Residue Lys-409 forms a Glycyl lysine isopeptide (Lys-Gly) (interchain with G-Cter in SUMO2); alternate linkage. Residues 416–436 are compositionally biased toward polar residues; that stretch reads VESSPPSITHSPQNELKGTNH. Phosphoserine occurs at positions 422, 426, 455, 457, 460, and 462. A compositionally biased stretch (polar residues) spans 458–470; sequence PKSTSPSAAGGQQ. Residue Lys-476 forms a Glycyl lysine isopeptide (Lys-Gly) (interchain with G-Cter in SUMO2) linkage. 2 consecutive C2H2-type zinc fingers follow at residues 486–508 and 519–542; these read LYCKLCKRQFTSKQNLTKHIELH and YKCPLCTYETRRKRDVIRHITVVH. 2 disordered regions span residues 574 to 599 and 635 to 664; these read KRGPSRDEAKHSDSKHDGTSNSPSKK and HHKKTHKANASNSPEGNKTKGRSTRSKALV. Residues 577–591 show a composition bias toward basic and acidic residues; it reads PSRDEAKHSDSKHDG. A Glycyl lysine isopeptide (Lys-Gly) (interchain with G-Cter in SUMO2) cross-link involves residue Lys-599. Residues 618–640 form a C2H2-type 7 zinc finger; the sequence is HRCNKCGKAFAKKTYLEHHKKTH. A compositionally biased stretch (basic residues) spans 653–664; that stretch reads TKGRSTRSKALV.

It belongs to the krueppel C2H2-type zinc-finger protein family.

The protein resides in the nucleus. In terms of biological role, may be involved in transcriptional regulation. The chain is Zinc finger protein 800 (ZNF800) from Homo sapiens (Human).